The chain runs to 259 residues: MMTDARTTAEGGMETSYGFHKVDEGKKQGLVNEVFHKVAKRYDIMNDVMSAGLHRLWKDAMVSALSPRKDPSYKILDVAGGTGDVAFRIIEASNRLAHATVLDINGSMLAVGEERAAKKKLSDNLTFVEANAEELPFEANTFDAYTVAFGIRNVPRIDVALKEAYRVLKRGGRLLVLEFSEVDMPLLDRVYDAWSFNAIPQFGKMITGDAEPYQYLVESIRKFPNQEDFATMIRTAGFSRVTYTNYTGGIAALHSGWKL.

S-adenosyl-L-methionine-binding positions include Thr-82, Asp-103, and 131–132; that span reads NA.

It belongs to the class I-like SAM-binding methyltransferase superfamily. MenG/UbiE family.

It carries out the reaction a 2-demethylmenaquinol + S-adenosyl-L-methionine = a menaquinol + S-adenosyl-L-homocysteine + H(+). The enzyme catalyses a 2-methoxy-6-(all-trans-polyprenyl)benzene-1,4-diol + S-adenosyl-L-methionine = a 5-methoxy-2-methyl-3-(all-trans-polyprenyl)benzene-1,4-diol + S-adenosyl-L-homocysteine + H(+). It participates in quinol/quinone metabolism; menaquinone biosynthesis; menaquinol from 1,4-dihydroxy-2-naphthoate: step 2/2. It functions in the pathway cofactor biosynthesis; ubiquinone biosynthesis. In terms of biological role, methyltransferase required for the conversion of demethylmenaquinol (DMKH2) to menaquinol (MKH2) and the conversion of 2-polyprenyl-6-methoxy-1,4-benzoquinol (DDMQH2) to 2-polyprenyl-3-methyl-6-methoxy-1,4-benzoquinol (DMQH2). In Agrobacterium fabrum (strain C58 / ATCC 33970) (Agrobacterium tumefaciens (strain C58)), this protein is Ubiquinone/menaquinone biosynthesis C-methyltransferase UbiE.